The primary structure comprises 250 residues: Triosephosphate isomerase (250 aa).

Asn-9–Lys-11 serves as a coordination point for substrate. The active-site Electrophile is His-96. Glu-168 acts as the Proton acceptor in catalysis. Substrate is bound by residues Gly-174, Ser-216, and Gly-237 to Gly-238.

This sequence belongs to the triosephosphate isomerase family. In terms of assembly, homodimer.

The protein resides in the cytoplasm. It carries out the reaction D-glyceraldehyde 3-phosphate = dihydroxyacetone phosphate. It functions in the pathway carbohydrate biosynthesis; gluconeogenesis. The protein operates within carbohydrate degradation; glycolysis; D-glyceraldehyde 3-phosphate from glycerone phosphate: step 1/1. In terms of biological role, involved in the gluconeogenesis. Catalyzes stereospecifically the conversion of dihydroxyacetone phosphate (DHAP) to D-glyceraldehyde-3-phosphate (G3P). The protein is Triosephosphate isomerase of Leptospira borgpetersenii serovar Hardjo-bovis (strain JB197).